The following is a 145-amino-acid chain: Large ribosomal subunit protein uL15 (145 aa).

The interval M1–E50 is disordered. Positions R20–S30 are enriched in gly residues.

The protein belongs to the universal ribosomal protein uL15 family. In terms of assembly, part of the 50S ribosomal subunit.

Functionally, binds to the 23S rRNA. This chain is Large ribosomal subunit protein uL15, found in Phytoplasma australiense.